The sequence spans 352 residues: Phosphoribosylformylglycinamidine cyclo-ligase (352 aa).

The protein belongs to the AIR synthase family.

It is found in the cytoplasm. It catalyses the reaction 2-formamido-N(1)-(5-O-phospho-beta-D-ribosyl)acetamidine + ATP = 5-amino-1-(5-phospho-beta-D-ribosyl)imidazole + ADP + phosphate + H(+). It functions in the pathway purine metabolism; IMP biosynthesis via de novo pathway; 5-amino-1-(5-phospho-D-ribosyl)imidazole from N(2)-formyl-N(1)-(5-phospho-D-ribosyl)glycinamide: step 2/2. The protein is Phosphoribosylformylglycinamidine cyclo-ligase of Saccharophagus degradans (strain 2-40 / ATCC 43961 / DSM 17024).